Here is a 247-residue protein sequence, read N- to C-terminus: Large ribosomal subunit protein uL24m (247 aa).

A KOW domain is found at 84-117; sequence FFRGDRIEVLVGKDKGKQGIVTQVIPERNWVIVE.

Belongs to the universal ribosomal protein uL24 family. Component of the mitochondrial ribosome large subunit (39S) which comprises a 16S rRNA and about 50 distinct proteins.

It is found in the mitochondrion. In Drosophila melanogaster (Fruit fly), this protein is Large ribosomal subunit protein uL24m (mRpL24).